Consider the following 404-residue polypeptide: Trigger factor (404 aa).

Residues 160 to 225 (KDHLFVRTEE…VLEVKTLKLP (66 aa)) form the PPIase FKBP-type domain.

It belongs to the FKBP-type PPIase family. Tig subfamily.

It is found in the cytoplasm. It catalyses the reaction [protein]-peptidylproline (omega=180) = [protein]-peptidylproline (omega=0). Its function is as follows. Involved in protein export. Acts as a chaperone by maintaining the newly synthesized protein in an open conformation. Functions as a peptidyl-prolyl cis-trans isomerase. This Thermus thermophilus (strain ATCC 27634 / DSM 579 / HB8) protein is Trigger factor.